The primary structure comprises 359 residues: N-acetyl-gamma-glutamyl-phosphate reductase (359 aa).

The active site involves cysteine 162.

Belongs to the NAGSA dehydrogenase family. Type 1 subfamily.

It is found in the cytoplasm. The enzyme catalyses N-acetyl-L-glutamate 5-semialdehyde + phosphate + NADP(+) = N-acetyl-L-glutamyl 5-phosphate + NADPH + H(+). It functions in the pathway amino-acid biosynthesis; L-arginine biosynthesis; N(2)-acetyl-L-ornithine from L-glutamate: step 3/4. In terms of biological role, catalyzes the NADPH-dependent reduction of N-acetyl-5-glutamyl phosphate to yield N-acetyl-L-glutamate 5-semialdehyde. The sequence is that of N-acetyl-gamma-glutamyl-phosphate reductase from Prochlorococcus marinus (strain SARG / CCMP1375 / SS120).